The chain runs to 318 residues: Aspartate carbamoyltransferase catalytic subunit (318 aa).

Carbamoyl phosphate is bound by residues Arg-56 and Thr-57. Lys-84 lines the L-aspartate pocket. The carbamoyl phosphate site is built by Arg-106, His-143, and Gln-146. 2 residues coordinate L-aspartate: Arg-176 and Arg-230. Carbamoyl phosphate contacts are provided by Gly-271 and Pro-272.

Belongs to the aspartate/ornithine carbamoyltransferase superfamily. ATCase family. Heterododecamer (2C3:3R2) of six catalytic PyrB chains organized as two trimers (C3), and six regulatory PyrI chains organized as three dimers (R2).

The enzyme catalyses carbamoyl phosphate + L-aspartate = N-carbamoyl-L-aspartate + phosphate + H(+). Its pathway is pyrimidine metabolism; UMP biosynthesis via de novo pathway; (S)-dihydroorotate from bicarbonate: step 2/3. Catalyzes the condensation of carbamoyl phosphate and aspartate to form carbamoyl aspartate and inorganic phosphate, the committed step in the de novo pyrimidine nucleotide biosynthesis pathway. This chain is Aspartate carbamoyltransferase catalytic subunit, found in Mycobacterium avium (strain 104).